Consider the following 102-residue polypeptide: Monothiol glutaredoxin-S9 (102 aa).

A Glutaredoxin domain is found at 1–101 (MDKVVRMSSE…PLVKPFQANL (101 aa)). Position 21 (Cys-21) interacts with [2Fe-2S] cluster.

It belongs to the glutaredoxin family. CC-type subfamily.

It is found in the cytoplasm. Its function is as follows. May only reduce GSH-thiol disulfides, but not protein disulfides. The chain is Monothiol glutaredoxin-S9 (GRXS9) from Arabidopsis thaliana (Mouse-ear cress).